The chain runs to 366 residues: Pyrimidine monooxygenase RutA (366 aa).

Residues 49–50 (IK), asparagine 115, glutamate 124, 140–141 (RY), and serine 190 contribute to the FMN site.

It belongs to the NtaA/SnaA/DszA monooxygenase family. RutA subfamily.

The enzyme catalyses uracil + FMNH2 + NADH + O2 = (Z)-3-ureidoacrylate + FMN + NAD(+) + H2O + H(+). It catalyses the reaction thymine + FMNH2 + NADH + O2 = (Z)-2-methylureidoacrylate + FMN + NAD(+) + H2O + H(+). Its function is as follows. Catalyzes the pyrimidine ring opening between N-3 and C-4 by an unusual flavin hydroperoxide-catalyzed mechanism, adding oxygen atoms in the process to yield ureidoacrylate peracid, that immediately reacts with FMN forming ureidoacrylate and FMN-N(5)-oxide. The FMN-N(5)-oxide reacts spontaneously with NADH to produce FMN. Requires the flavin reductase RutF to regenerate FMN in vivo. This is Pyrimidine monooxygenase RutA from Serratia proteamaculans (strain 568).